We begin with the raw amino-acid sequence, 266 residues long: Oxidoreductase aflX (266 aa).

It belongs to the avfA family.

It participates in mycotoxin biosynthesis; aflatoxin biosynthesis. Functionally, oxidoreductase; part of the gene cluster that mediates the biosynthesis of aflatoxins, a group of polyketide-derived furanocoumarins, and part of the most toxic and carcinogenic compounds among the known mycotoxins. The four major aflatoxins produced by A.parasiticus are aflatoxin B1 (AFB1), aflatoxin B2 (AFB2), aflatoxin G1 (AFG1) and aflatoxin G2 (AFG2). Within the aflatoxin pathway, the oxidoreductase aflX seems to be involved in the conversion of versicolorin A (VERA) to demethylsterigmatocystin (DMST), through probable epoxide ring-opening step following versicolorin A oxidation required for the formation of the xanthone ring. The biosynthesis of aflatoxins begins with the norsolorinic acid synthase aflC that combines a hexanoyl starter unit produced by the fatty acid synthase aflA/aflB and 7 malonyl-CoA extender units to synthesize the precursor NOR. The second step is the conversion of NOR to averantin and requires the norsolorinic acid ketoreductase aflD, which catalyzes the dehydration of norsolorinic acid to form (1'S)-averantin. The norsolorinic acid reductases aflE and aflF may also play a role in the conversion of NOR to AVN. The cytochrome P450 monooxygenase aflG then catalyzes the hydroxylation of AVN to 5'hydroxyaverantin (HAVN). The next step is performed by the 5'-hydroxyaverantin dehydrogenase aflH that transforms HAVN to 5'-oxoaverantin (OAVN) which is further converted to averufin (AVF) by aflK that plays a dual role in the pathway, as a 5'-oxoaverantin cyclase that mediates conversion of 5'-oxoaverantin, as well as a versicolorin B synthase in a later step in the pathway. The averufin oxidase aflI catalyzes the conversion of AVF to versiconal hemiacetal acetate (VHA). VHA is then the substrate for the versiconal hemiacetal acetate esterase aflJ to yield versiconal (VAL). Versicolorin B synthase aflK then converts VAL to versicolorin B (VERB) by closing the bisfuran ring of aflatoxin which is required for DNA-binding, thus giving to aflatoxin its activity as a mutagen. Then, the activity of the versicolorin B desaturase aflL leads to versicolorin A (VERA). A branch point starts from VERB since it can also be converted to dihydrodemethylsterigmatocystin (DMDHST), probably also by aflL, VERA being a precursor for aflatoxins B1 and G1, and DMDHST for aflatoxins B2 and G2. Next, the versicolorin reductase aflM and the cytochrome P450 monooxygenase aflN are involved in conversion of VERA to demethylsterigmatocystin (DMST). AflX and aflY seem also involved in this step, through probable aflX-mediated epoxide ring-opening step following versicolorin A oxidation and aflY-mediated Baeyer-Villiger oxidation required for the formation of the xanthone ring. The methyltransferase aflO then leads to the modification of DMST to sterigmatocystin (ST), and of DMDHST to dihydrosterigmatocystin (DHST). Both ST and DHST are then substrates of the O-methyltransferase aflP to yield O-methylsterigmatocystin (OMST) and dihydro-O-methylsterigmatocystin (DHOMST), respectively. Finally OMST is converted to aflatoxins B1 and G1, and DHOMST to aflatoxins B2 and G2, via the action of several enzymes including O-methylsterigmatocystin oxidoreductase aflQ, the cytochrome P450 monooxygenase aflU, but also the NADH-dependent flavin oxidoreductase nadA which is specifically required for the synthesis of AFG1. The protein is Oxidoreductase aflX of Aspergillus parasiticus (strain ATCC 56775 / NRRL 5862 / SRRC 143 / SU-1).